The following is a 111-amino-acid chain: Cytochrome c6-like (111 aa).

The N-terminal stretch at 1–25 (MQKFLKLVLVTFLFLISTLTPPANA) is a signal peptide. 4 residues coordinate heme c: Cys-39, Cys-42, His-43, and Met-83.

The protein belongs to the cytochrome c family. PetJ subfamily. Binds 1 heme c group covalently per subunit.

It is found in the cellular thylakoid lumen. The sequence is that of Cytochrome c6-like from Nostoc sp. (strain PCC 7120 / SAG 25.82 / UTEX 2576).